Reading from the N-terminus, the 1150-residue chain is BAI1-associated protein 3 (1150 aa).

Positions 22-44 (RRKTEQEPEVTNSQEPPTGAWKP) are disordered. The region spanning 139-298 (SSEEHMEAIM…VKSARANGTA (160 aa)) is the C2 1 domain. The Ca(2+) site is built by Asp174 and Asp180. Residues 193–214 (APQEPSGQKEQRFGFRKGSKRS) are disordered. 2 residues coordinate Ca(2+): Asp258 and Asp260. The MHD1 domain occupies 626–747 (FELYLTLADT…EASLFYTELL (122 aa)). Residues 851–959 (DEAVAPLLKY…CSTRECIEQF (109 aa)) form the MHD2 domain. Residues 973-1099 (RFGRLTVRCH…GIARPHVGGG (127 aa)) enclose the C2 2 domain. 7 residues coordinate Ca(2+): Leu1003, Asp1004, Asp1010, Asp1068, Asp1070, Ser1073, and Asp1076.

The protein belongs to the unc-13 family. Interacts with ADGRB1, this interaction is direct. Interacts with endosomal SNARE proteins VAMP3, VAMP4, STX6 and STX16; this interaction is increased in the presence of calcium. It depends on Ca(2+) as a cofactor. Prominently expressed in brain structures including hypothalamus, amygdala, stria terminalis and periaqueductal gray (at protein level). Expressed in nonneuronal tissues, including placenta, lung, pancreas, spleen, and testes. Within placenta, expression is restricted to the syncytiotrophoblasts.

Its subcellular location is the cytoplasm. It is found in the cytosol. The protein resides in the recycling endosome membrane. The protein localises to the late endosome membrane. It localises to the golgi apparatus. Its subcellular location is the trans-Golgi network membrane. It is found in the cell membrane. Its function is as follows. Functions in endosome to Golgi retrograde transport. In response to calcium influx, may interact with SNARE fusion receptors and membrane phospholipids to mediate endosome fusion with the trans-Golgi network. By promoting the recycling of secretory vesicle transmembrane proteins, it indirectly controls dense-core secretory vesicle biogenesis, maturation and their ability to mediate the constitutive and regulated secretion of neurotransmitters and hormones. May regulate behavior and food intake by controlling calcium-stimulated exocytosis of neurotransmitters including NPY and serotonin and hormones like insulin. Proposed to play a role in hypothalamic neuronal firing by modulating gamma-aminobutyric acid (GABA)ergic inhibitory neurotransmission. The protein is BAI1-associated protein 3 of Mus musculus (Mouse).